A 253-amino-acid polypeptide reads, in one-letter code: Methionine aminopeptidase (253 aa).

H78 lines the substrate pocket. 3 residues coordinate a divalent metal cation: D95, D106, and H169. H176 is a substrate binding site. Residues E206 and E237 each contribute to the a divalent metal cation site.

It belongs to the peptidase M24A family. Methionine aminopeptidase type 1 subfamily. In terms of assembly, monomer. Co(2+) is required as a cofactor. It depends on Zn(2+) as a cofactor. Requires Mn(2+) as cofactor. The cofactor is Fe(2+).

The catalysed reaction is Release of N-terminal amino acids, preferentially methionine, from peptides and arylamides.. Its function is as follows. Removes the N-terminal methionine from nascent proteins. The N-terminal methionine is often cleaved when the second residue in the primary sequence is small and uncharged (Met-Ala-, Cys, Gly, Pro, Ser, Thr, or Val). Requires deformylation of the N(alpha)-formylated initiator methionine before it can be hydrolyzed. In Helicobacter pylori (strain J99 / ATCC 700824) (Campylobacter pylori J99), this protein is Methionine aminopeptidase.